A 524-amino-acid polypeptide reads, in one-letter code: Ribose import ATP-binding protein RbsA (524 aa).

ABC transporter domains follow at residues leucine 17–isoleucine 252 and isoleucine 263–valine 505. Glycine 49–serine 56 serves as a coordination point for ATP.

It belongs to the ABC transporter superfamily. Ribose importer (TC 3.A.1.2.1) family. The complex is composed of an ATP-binding protein (RbsA), two transmembrane proteins (RbsC) and a solute-binding protein (RbsB).

It localises to the cell membrane. It catalyses the reaction D-ribose(out) + ATP + H2O = D-ribose(in) + ADP + phosphate + H(+). Its function is as follows. Part of the ABC transporter complex RbsABC involved in ribose import. Responsible for energy coupling to the transport system. The sequence is that of Ribose import ATP-binding protein RbsA from Corynebacterium glutamicum (strain ATCC 13032 / DSM 20300 / JCM 1318 / BCRC 11384 / CCUG 27702 / LMG 3730 / NBRC 12168 / NCIMB 10025 / NRRL B-2784 / 534).